Here is a 353-residue protein sequence, read N- to C-terminus: tRNA N(3)-cytidine methyltransferase METTL2 (353 aa).

The segment at 1-37 (MAAPVVAADSPVIENMPETAGGATENSAEAQKRPQFG) is disordered. Residues tryptophan 93, tyrosine 97, glycine 165, aspartate 190, aspartate 216, and isoleucine 237 each contribute to the S-adenosyl-L-methionine site.

Belongs to the methyltransferase superfamily. METL family. In terms of assembly, monomer.

The protein resides in the cytoplasm. It carries out the reaction cytidine(32) in tRNA(Thr) + S-adenosyl-L-methionine = N(3)-methylcytidine(32) in tRNA(Thr) + S-adenosyl-L-homocysteine + H(+). It catalyses the reaction cytidine(32) in tRNA(Arg)(CCU) + S-adenosyl-L-methionine = N(3)-methylcytidine(32) in tRNA(Arg)(CCU) + S-adenosyl-L-homocysteine + H(+). Its function is as follows. S-adenosyl-L-methionine-dependent methyltransferase that mediates N(3)-methylcytidine modification of residue 32 of the tRNA anticodon loop of tRNA(Thr)(UGU) and tRNA(Arg)(CCU). N(3)-methylcytidine methylation by mettl2a requires the N6-threonylcarbamoylation of tRNA (t6A37) by the EKC/KEOPS complex as prerequisite. This Danio rerio (Zebrafish) protein is tRNA N(3)-cytidine methyltransferase METTL2 (mettl2a).